The sequence spans 91 residues: Large ribosomal subunit protein uL23c (91 aa).

It belongs to the universal ribosomal protein uL23 family. In terms of assembly, part of the 50S ribosomal subunit.

The protein localises to the plastid. It is found in the chloroplast. Binds to 23S rRNA. In Pinus koraiensis (Korean pine), this protein is Large ribosomal subunit protein uL23c (rpl23).